Here is a 381-residue protein sequence, read N- to C-terminus: Zinc finger CCCH domain-containing protein 61 (381 aa).

A disordered region spans residues 1-39 (MDVEHHKSGHISRPTVDIPPRKLLSSAKSPSSVSSPLRD). Residues 21–37 (RKLLSSAKSPSSVSSPL) are compositionally biased toward low complexity. 2 C3H1-type zinc fingers span residues 101-128 (YTGEVCPEFSRHGDCSRGDECGFAHGVF) and 137-159 (YRTEACKDGKHCKRKVCFFAHSP).

In terms of assembly, interacts with MARD1/FLZ9 and RD21A via its CCCH zing finger domains.

Its subcellular location is the cytoplasm. It is found in the stress granule. The protein localises to the P-body. This chain is Zinc finger CCCH domain-containing protein 61, found in Arabidopsis thaliana (Mouse-ear cress).